Reading from the N-terminus, the 138-residue chain is Small ribosomal subunit protein uS11B (138 aa).

The segment at 118-138 (DVTPVPSDSTRKKGGRRGRRL) is disordered. A compositionally biased stretch (basic residues) spans 129–138 (KKGGRRGRRL).

This sequence belongs to the universal ribosomal protein uS11 family. As to quaternary structure, component of the small ribosomal subunit (SSU). Mature yeast ribosomes consist of a small (40S) and a large (60S) subunit. The 40S small subunit contains 1 molecule of ribosomal RNA (18S rRNA) and 33 different proteins (encoded by 57 genes). The large 60S subunit contains 3 rRNA molecules (25S, 5.8S and 5S rRNA) and 46 different proteins (encoded by 81 genes). uS11 interacts with eS1 forming part of the mRNA exit tunnel. uS11 interacts with snoRNA U3. uS11 interacts with MPP10. Component of the ribosomal small subunit (SSU) processome composed of at least 40 protein subunits and snoRNA U3.

It localises to the cytoplasm. Its subcellular location is the nucleus. It is found in the nucleolus. Its function is as follows. Component of the ribosome, a large ribonucleoprotein complex responsible for the synthesis of proteins in the cell. The small ribosomal subunit (SSU) binds messenger RNAs (mRNAs) and translates the encoded message by selecting cognate aminoacyl-transfer RNA (tRNA) molecules. The large subunit (LSU) contains the ribosomal catalytic site termed the peptidyl transferase center (PTC), which catalyzes the formation of peptide bonds, thereby polymerizing the amino acids delivered by tRNAs into a polypeptide chain. The nascent polypeptides leave the ribosome through a tunnel in the LSU and interact with protein factors that function in enzymatic processing, targeting, and the membrane insertion of nascent chains at the exit of the ribosomal tunnel. uS11 is involved in nucleolar processing of pre-18S ribosomal RNA and ribosome assembly. The protein is Small ribosomal subunit protein uS11B of Saccharomyces cerevisiae (strain ATCC 204508 / S288c) (Baker's yeast).